A 522-amino-acid polypeptide reads, in one-letter code: E3 ubiquitin-protein ligase DMA2 (522 aa).

2 disordered regions span residues 1–56 (MYTP…RPAS) and 69–92 (QNSQTASSSAAPDQRLFGTTPSNS). Residues 14–35 (APTSSMTSNSSSASNANTTSSS) are compositionally biased toward low complexity. Residues 36-49 (GINPRNRASGTPSN) show a composition bias toward polar residues. At serine 206 the chain carries Phosphoserine. Residues lysine 211, lysine 256, lysine 258, lysine 288, lysine 310, lysine 333, lysine 343, lysine 346, lysine 366, lysine 406, lysine 412, and lysine 423 each participate in a glycyl lysine isopeptide (Lys-Gly) (interchain with G-Cter in ubiquitin) cross-link. The FHA domain occupies 295–358 (LVIGRYTERV…SGTFLNHQRL (64 aa)). The RING-type zinc-finger motif lies at 433–477 (CSICLCKIKPCQAIFISPCAHSWHFRCVRRLVMLSYPQFVCPNCR).

Belongs to the DMA1 family. In terms of processing, UBC4-dependent autoubiquitination occurs at Lys-211, Lys-258, Lys-288, Lys-310, Lys-333, Lys-343, Lys-346, Lys-366, Lys-406, Lys-412 and Lys-423. UBC4-dependent autoubiquitination is responsible for DMA2 turnover. UBC13/MMS2-dependent autoubiquitination occurs at Lys-258, Lys-310, Lys-346 and Lys-366. Lys-211, Lys-256, Lys-288, Lys-310, Lys-343, Lys-258, Lys-366 and Lys-412 are also ubiquitinated in trans by DMA1 E3 ligase in association with UBC4.

Its subcellular location is the cytoplasm. It carries out the reaction S-ubiquitinyl-[E2 ubiquitin-conjugating enzyme]-L-cysteine + [acceptor protein]-L-lysine = [E2 ubiquitin-conjugating enzyme]-L-cysteine + N(6)-ubiquitinyl-[acceptor protein]-L-lysine.. Functionally, E3 ubiquitin-protein ligase which functions in cell cycle retarding in conjunction with the UBC4 and UBC13/MMS2 complex, 2 E2 ubiquitin conjugating enzymes. Involved in nutritional control of the cell cycle. Required for proper spindle positioning, likely regulating septin ring deposition at the bud neck. This chain is E3 ubiquitin-protein ligase DMA2 (DMA2), found in Saccharomyces cerevisiae (strain ATCC 204508 / S288c) (Baker's yeast).